A 31-amino-acid polypeptide reads, in one-letter code: leu operon leader peptide (31 aa).

Functionally, involved in control of the biosynthesis of leucine. In Buchnera aphidicola subsp. Rhopalosiphum padi, this protein is leu operon leader peptide (leuL).